The following is a 399-amino-acid chain: Ras-related GTP-binding protein C (399 aa).

Positions 1–20 (MSLQYGAEETPLAGSYGAAD) are disordered. N-acetylserine is present on Ser-2. A phosphoserine mark is found at Ser-2 and Ser-15. 14 residues coordinate GDP: Arg-71, Ser-72, Gly-73, Lys-74, Ser-75, Ser-76, Thr-90, Glu-94, Thr-96, His-178, Lys-179, Asp-181, Ser-219, and Ile-220. Lys-74 contributes to the GTP binding site. Residue Thr-90 coordinates GTP. Thr-96 contacts GTP. Thr-96 carries the post-translational modification Phosphothreonine. Residue Asp-181 coordinates GTP.

The protein belongs to the GTR/RAG GTP-binding protein family. As to quaternary structure, forms a heterodimer with RRAGA, in a sequence-independent manner, and RRAGB. Heterodimerization stabilizes proteins of the heterodimer. The GDP-bound form of RRAGC (in complex with the GTP-bound form of RRAGA or RRAGB), interacts with RPTOR, thereby promoting recruitment of mTORC1 to the lysosomes. Component of the lysosomal folliculin complex (LFC), composed of FLCN, FNIP1 (or FNIP2), RagA/RRAGA or RagB/RRAGB GDP-bound, RagC/RRAGC or RagD/RRAGD GTP-bound, and Ragulator. Interacts with NOL8. Interacts with SH3BP4; the interaction with this negative regulator is most probably direct, preferentially occurs with the inactive GDP-bound form of RRAGB, is negatively regulated by amino acids and prevents interaction with RPTOR. The Rag heterodimer interacts with SLC38A9; the probable amino acid sensor. Interacts with SESN1, SESN2 and SESN3. Interacts with PIP4P1. The Rag heterodimer interacts with the Ragulator complex. The GDP-bound form interacts with TFEB. The GDP-bound form interacts with TFE3.

Its subcellular location is the cytoplasm. It is found in the nucleus. It localises to the lysosome membrane. The catalysed reaction is GTP + H2O = GDP + phosphate + H(+). Its activity is regulated as follows. The activation of RagC/RRAGC is mediated by a GTPase activating protein (GAP). In high-amino acid conditions, activated by GTPase activating protein FLCN that stimulates RRAGC GTPase activity to turn it into its active GDP-bound form. In response to amino acid depletion, the GATOR1 complex inactivates RagC/RRAGC by securing the GTP-bound inactive form. Guanine nucleotide-binding protein that plays a crucial role in the cellular response to amino acid availability through regulation of the mTORC1 signaling cascade. Forms heterodimeric Rag complexes with RagA/RRAGA or RagB/RRAGB and cycles between an inactive GTP-bound and an active GDP-bound form: RagC/RRAGC is in its active form when GDP-bound RagC/RRAGC forms a complex with GTP-bound RagA/RRAGA (or RagB/RRAGB) and in an inactive form when GTP-bound RagC/RRAGC heterodimerizes with GDP-bound RagA/RRAGA (or RagB/RRAGB). In its GDP-bound active form, promotes the recruitment of mTORC1 to the lysosomes and its subsequent activation by the GTPase RHEB. This is a crucial step in the activation of the MTOR signaling cascade by amino acids. Also plays a central role in the non-canonical mTORC1 complex, which acts independently of RHEB and specifically mediates phosphorylation of MiT/TFE factors TFEB and TFE3: GDP-bound RagC/RRAGC mediates recruitment of MiT/TFE factors TFEB and TFE3. This is Ras-related GTP-binding protein C from Homo sapiens (Human).